A 105-amino-acid chain; its full sequence is Small ribosomal subunit protein bS20 (105 aa).

It belongs to the bacterial ribosomal protein bS20 family.

In terms of biological role, binds directly to 16S ribosomal RNA. The chain is Small ribosomal subunit protein bS20 from Caldanaerobacter subterraneus subsp. tengcongensis (strain DSM 15242 / JCM 11007 / NBRC 100824 / MB4) (Thermoanaerobacter tengcongensis).